Reading from the N-terminus, the 540-residue chain is [Co(II) methylated amine-specific corrinoid protein] reductase (540 aa).

4Fe-4S ferredoxin-type domains follow at residues 471-500 and 504-535; these read IILE…IVER and RIAK…ITKL. Residues Cys-480, Cys-483, Cys-486, Cys-490, Cys-513, Cys-518, Cys-521, and Cys-525 each contribute to the [4Fe-4S] cluster site.

In terms of assembly, monomer. Requires [4Fe-4S] cluster as cofactor.

The enzyme catalyses 2 Co(II)-[methylamine-specific corrinoid protein] + AH2 + ATP + H2O = 2 Co(I)-[methylamine-specific corrinoid protein] + A + ADP + phosphate + 3 H(+). The catalysed reaction is 2 Co(II)-[dimethylamine-specific corrinoid protein] + AH2 + ATP + H2O = 2 Co(I)-[dimethylamine-specific corrinoid protein] + A + ADP + phosphate + 3 H(+). It carries out the reaction 2 Co(II)-[trimethylamine-specific corrinoid protein] + AH2 + ATP + H2O = 2 Co(I)-[trimethylamine-specific corrinoid protein] + A + ADP + phosphate + 3 H(+). It participates in one-carbon metabolism; methanogenesis from methylamine. Its pathway is one-carbon metabolism; methanogenesis from dimethylamine. The protein operates within one-carbon metabolism; methanogenesis from trimethylamine. Reductase required for the activation of corrinoid-dependent methylamine methyltransferase reactions during methanogenesis. Mediates the ATP-dependent reduction of corrinoid proteins from the inactive cobalt(II) state to the active cobalt(I) state. Acts on the corrinoid proteins involved in methanogenesis from monomethylamine (MMA), dimethylamine (DMA) and trimethylamine (TMA), namely MtmC, MtbC and MttC, respectively. The sequence is that of [Co(II) methylated amine-specific corrinoid protein] reductase from Methanosarcina barkeri.